Reading from the N-terminus, the 62-residue chain is MAVPKRKTSPMKRGFRRSADALAAPTYVEDKDSGELRRPHHVDLKTGMYRGRQILTPKNKEA.

The span at 1–16 shows a compositional bias: basic residues; the sequence is MAVPKRKTSPMKRGFR. A disordered region spans residues 1–62; sequence MAVPKRKTSP…QILTPKNKEA (62 aa). Residues 28–44 show a composition bias toward basic and acidic residues; sequence VEDKDSGELRRPHHVDL.

This sequence belongs to the bacterial ribosomal protein bL32 family.

The polypeptide is Large ribosomal subunit protein bL32 (Methylocella silvestris (strain DSM 15510 / CIP 108128 / LMG 27833 / NCIMB 13906 / BL2)).